The sequence spans 468 residues: Aldehyde dehydrogenase family 3 member B1 (468 aa).

M1 carries the N-acetylmethionine modification. 188–193 (GNAYVG) lines the NAD(+) pocket. Catalysis depends on residues E210 and C244. Residues C462 and C463 are each lipidated (S-palmitoyl cysteine). C465 is modified (cysteine methyl ester). C465 is lipidated: S-geranylgeranyl cysteine. Residues 466–468 (TLL) constitute a propeptide, removed in mature form.

This sequence belongs to the aldehyde dehydrogenase family. Dually lipidated in the C-terminus; prenylation occurs prior to, and is a prerequisite for palmitoylation. It is also required for activity towards long-chain substrates. Highly expressed in kidney and liver. In brain is expressed at moderate levels in cortex, striatum and hippocampus, and at lower levels in brainstem and cerebellum.

The protein resides in the cell membrane. It carries out the reaction an aldehyde + NAD(+) + H2O = a carboxylate + NADH + 2 H(+). The catalysed reaction is a long-chain fatty aldehyde + NAD(+) + H2O = a long-chain fatty acid + NADH + 2 H(+). It catalyses the reaction a medium-chain fatty aldehyde + NAD(+) + H2O = a medium-chain fatty acid + NADH + 2 H(+). The enzyme catalyses octanal + NAD(+) + H2O = octanoate + NADH + 2 H(+). It carries out the reaction nonanal + NAD(+) + H2O = nonanoate + NADH + 2 H(+). The catalysed reaction is hexadecanoate + NADH + 2 H(+) = hexadecanal + NAD(+) + H2O. It catalyses the reaction (2E)-octenal + NAD(+) + H2O = (2E)-octenoate + NADH + 2 H(+). The enzyme catalyses (E)-non-2-enal + NAD(+) + H2O = (E)-non-2-enoate + NADH + 2 H(+). It carries out the reaction (E)-4-hydroxynon-2-enal + NAD(+) + H2O = (E)-4-hydroxynon-2-enoate + NADH + 2 H(+). The catalysed reaction is (2E)-hexadecenal + NAD(+) + H2O = (E)-hexadec-2-enoate + NADH + 2 H(+). It catalyses the reaction benzaldehyde + NAD(+) + H2O = benzoate + NADH + 2 H(+). The enzyme catalyses an aldehyde + NADP(+) + H2O = a carboxylate + NADPH + 2 H(+). It carries out the reaction a medium-chain fatty aldehyde + NADP(+) + H2O = a medium-chain fatty acid + NADPH + 2 H(+). The catalysed reaction is hexanal + NADP(+) + H2O = hexanoate + NADPH + 2 H(+). It catalyses the reaction octanal + NADP(+) + H2O = octanoate + NADPH + 2 H(+). The enzyme catalyses nonanal + NADP(+) + H2O = nonanoate + NADPH + 2 H(+). It carries out the reaction (2E)-octenal + NADP(+) + H2O = (2E)-octenoate + NADPH + 2 H(+). The catalysed reaction is (E)-non-2-enal + NADP(+) + H2O = (E)-non-2-enoate + NADPH + 2 H(+). It catalyses the reaction (E)-4-hydroxynon-2-enal + NADP(+) + H2O = (E)-4-hydroxynon-2-enoate + NADPH + 2 H(+). The enzyme catalyses benzaldehyde + NADP(+) + H2O = benzoate + NADPH + 2 H(+). It functions in the pathway alcohol metabolism; ethanol degradation; acetate from ethanol: step 2/2. Functionally, oxidizes medium and long chain saturated and unsaturated fatty aldehydes generated in the plasma membrane into non-toxic fatty acids. May have a protective role against the cytotoxicity induced by lipid peroxidation. Short-chain fatty aldehydes are not good substrates. Can use both NADP(+) and NAD(+) as electron acceptor in vitro, however in vivo preference will depend on their tissue levels. Low activity towards acetaldehyde and 3,4-dihydroxyphenylacetaldehyde. Able to metabolize aromatic aldehydes such as benzaldehyde to their acid form. In Mus musculus (Mouse), this protein is Aldehyde dehydrogenase family 3 member B1 (Aldh3b1).